The following is a 1041-amino-acid chain: Putative transcription elongation factor SPT5 homolog 1 (1041 aa).

Residues 1 to 133 (MPRSRDEDDE…ERGDRRYERR (133 aa)) form a disordered region. Acidic residues-rich tracts occupy residues 7–32 (EDDE…EEEE), 53–69 (DYAE…DEDY), and 99–114 (DDED…DDFI). S59 is subject to Phosphoserine. Positions 122 to 133 (PDERGDRRYERR) are enriched in basic and acidic residues. KOW domains follow at residues 273-300 (DLSR…VDNV), 425-452 (HFMK…VDEE), 477-504 (YFEP…VDQH), and 601-628 (VIAV…IYKG). Disordered regions lie at residues 662–713 (NRNG…GDDS) and 768–921 (DTSR…GTGL). Residues 691-703 (GRGGGYNNSGGRH) are compositionally biased toward gly residues. A KOW 5 domain is found at 712 to 739 (DSLLGTTVKIRLGPFKGYRGPVVEVKGN). The segment covering 804–814 (DGMRTPMRDRA) has biased composition (basic and acidic residues). Composition is skewed to polar residues over residues 835–844 (SWGTSPQYQP) and 893–904 (TPGQPMTPSSAS). A KOW 6 domain is found at 988 to 1015 (PPRKSDRVKIVGGQYRGSTGKLIGIDGS).

Belongs to the SPT5 family.

Its subcellular location is the nucleus. Its function is as follows. May regulate transcription elongation by RNA polymerase II. May enhance transcriptional pausing at sites proximal to the promoter, which may in turn facilitate the assembly of an elongation competent RNA polymerase II complex. This is Putative transcription elongation factor SPT5 homolog 1 from Arabidopsis thaliana (Mouse-ear cress).